The following is a 186-amino-acid chain: Astacin-like metalloprotease toxin 5 (186 aa).

One can recognise a Peptidase M12A domain in the interval 1–186; sequence NAVKYDQQLW…CHSKRKAELL (186 aa). 2 disulfides stabilise this stretch: cysteine 42–cysteine 177 and cysteine 63–cysteine 84. A Zn(2+)-binding site is contributed by histidine 92. Glutamate 93 is an active-site residue. Residues histidine 96 and histidine 102 each coordinate Zn(2+). Asparagine 122 is a glycosylation site (N-linked (GlcNAc...) asparagine).

As to quaternary structure, monomer. Zn(2+) is required as a cofactor. In terms of tissue distribution, expressed by the venom gland.

The protein localises to the secreted. With respect to regulation, inhibited by 1,10-phenanthroline. Its function is as follows. Zinc metalloprotease. Provoques deadhesion of endothelial cells from cell cultures, and also degradation of fibronectin, fibrinogen and gelatin in vitro. Its role in the venom is not fully understood but it might act as a spreading factor that facilitates diffusion of other venom toxins. Alternatively, it might be involved in the proteolytic processing of other venom toxins or it might play a role in extra-oral digestion of prey. This Loxosceles gaucho (Spider) protein is Astacin-like metalloprotease toxin 5.